Reading from the N-terminus, the 315-residue chain is Ribonuclease Z (315 aa).

Residues His61, His63, Asp65, His66, His151, Asp219, and His278 each contribute to the Zn(2+) site. Asp65 acts as the Proton acceptor in catalysis.

It belongs to the RNase Z family. Homodimer. It depends on Zn(2+) as a cofactor.

It carries out the reaction Endonucleolytic cleavage of RNA, removing extra 3' nucleotides from tRNA precursor, generating 3' termini of tRNAs. A 3'-hydroxy group is left at the tRNA terminus and a 5'-phosphoryl group is left at the trailer molecule.. In terms of biological role, zinc phosphodiesterase, which displays some tRNA 3'-processing endonuclease activity. Probably involved in tRNA maturation, by removing a 3'-trailer from precursor tRNA. The protein is Ribonuclease Z of Clostridium botulinum (strain Alaska E43 / Type E3).